A 353-amino-acid polypeptide reads, in one-letter code: Methylthioribose-1-phosphate isomerase (353 aa).

Substrate-binding positions include 51 to 53 (RGA), arginine 94, and glutamine 199. Aspartate 240 (proton donor) is an active-site residue. Residue 250 to 251 (NK) participates in substrate binding.

Belongs to the eIF-2B alpha/beta/delta subunits family. MtnA subfamily. As to quaternary structure, homodimer.

The enzyme catalyses 5-(methylsulfanyl)-alpha-D-ribose 1-phosphate = 5-(methylsulfanyl)-D-ribulose 1-phosphate. Its pathway is amino-acid biosynthesis; L-methionine biosynthesis via salvage pathway; L-methionine from S-methyl-5-thio-alpha-D-ribose 1-phosphate: step 1/6. In terms of biological role, catalyzes the interconversion of methylthioribose-1-phosphate (MTR-1-P) into methylthioribulose-1-phosphate (MTRu-1-P). The protein is Methylthioribose-1-phosphate isomerase of Bacillus licheniformis (strain ATCC 14580 / DSM 13 / JCM 2505 / CCUG 7422 / NBRC 12200 / NCIMB 9375 / NCTC 10341 / NRRL NRS-1264 / Gibson 46).